A 142-amino-acid chain; its full sequence is 3-hydroxyacyl-[acyl-carrier-protein] dehydratase FabZ (142 aa).

His-48 is an active-site residue.

Belongs to the thioester dehydratase family. FabZ subfamily.

It is found in the cytoplasm. The enzyme catalyses a (3R)-hydroxyacyl-[ACP] = a (2E)-enoyl-[ACP] + H2O. In terms of biological role, involved in unsaturated fatty acids biosynthesis. Catalyzes the dehydration of short chain beta-hydroxyacyl-ACPs and long chain saturated and unsaturated beta-hydroxyacyl-ACPs. The polypeptide is 3-hydroxyacyl-[acyl-carrier-protein] dehydratase FabZ (Clostridioides difficile (strain 630) (Peptoclostridium difficile)).